The sequence spans 60 residues: Cytotoxin 2 (60 aa).

4 disulfides stabilise this stretch: Cys3–Cys21, Cys14–Cys38, Cys42–Cys53, and Cys54–Cys59.

Belongs to the three-finger toxin family. Short-chain subfamily. Type IA cytotoxin sub-subfamily. Monomer, or heterodimer with alpha-cobratoxin (AC P01391); disulfide-linked. As to expression, expressed by the venom gland.

The protein localises to the secreted. The protein resides in the target cell membrane. Its function is as follows. Monomer: shows cytolytic activity. Heterodimer: has no cytolytic activity, but retains most of the alpha-cobratoxin capacity to compete with alpha-bungarotoxin for binding to Torpedo and alpha-7/CHRNA7 nicotinic acetylcholine receptors (nAChRs) as well as to Lymnea stagnalis acetylcholine-binding protein. This is Cytotoxin 2 from Naja kaouthia (Monocled cobra).